Consider the following 127-residue polypeptide: Aspartate 1-decarboxylase (127 aa).

S25 functions as the Schiff-base intermediate with substrate; via pyruvic acid in the catalytic mechanism. S25 bears the Pyruvic acid (Ser) mark. T57 provides a ligand contact to substrate. The Proton donor role is filled by Y58. Substrate is bound at residue 73 to 75; the sequence is GAA.

Belongs to the PanD family. Heterooctamer of four alpha and four beta subunits. Pyruvate serves as cofactor. In terms of processing, is synthesized initially as an inactive proenzyme, which is activated by self-cleavage at a specific serine bond to produce a beta-subunit with a hydroxyl group at its C-terminus and an alpha-subunit with a pyruvoyl group at its N-terminus.

The protein resides in the cytoplasm. The enzyme catalyses L-aspartate + H(+) = beta-alanine + CO2. The protein operates within cofactor biosynthesis; (R)-pantothenate biosynthesis; beta-alanine from L-aspartate: step 1/1. Functionally, catalyzes the pyruvoyl-dependent decarboxylation of aspartate to produce beta-alanine. This is Aspartate 1-decarboxylase from Neisseria meningitidis serogroup B (strain ATCC BAA-335 / MC58).